Here is a 352-residue protein sequence, read N- to C-terminus: Chorismate synthase (352 aa).

Arginine 48 contacts NADP(+). FMN-binding positions include 125 to 127, 237 to 238, glycine 278, 293 to 297, and arginine 319; these read RSS, NA, and KPTSS.

The protein belongs to the chorismate synthase family. As to quaternary structure, homotetramer. The cofactor is FMNH2.

The enzyme catalyses 5-O-(1-carboxyvinyl)-3-phosphoshikimate = chorismate + phosphate. It participates in metabolic intermediate biosynthesis; chorismate biosynthesis; chorismate from D-erythrose 4-phosphate and phosphoenolpyruvate: step 7/7. In terms of biological role, catalyzes the anti-1,4-elimination of the C-3 phosphate and the C-6 proR hydrogen from 5-enolpyruvylshikimate-3-phosphate (EPSP) to yield chorismate, which is the branch point compound that serves as the starting substrate for the three terminal pathways of aromatic amino acid biosynthesis. This reaction introduces a second double bond into the aromatic ring system. In Francisella tularensis subsp. holarctica (strain FTNF002-00 / FTA), this protein is Chorismate synthase.